We begin with the raw amino-acid sequence, 454 residues long: Glutamyl-tRNA reductase (454 aa).

Substrate is bound by residues 49 to 52 (TCNR), serine 109, 114 to 116 (ETQ), and glutamine 120. Cysteine 50 (nucleophile) is an active-site residue. 189–194 (GAGKMG) contacts NADP(+).

This sequence belongs to the glutamyl-tRNA reductase family. Homodimer.

It catalyses the reaction (S)-4-amino-5-oxopentanoate + tRNA(Glu) + NADP(+) = L-glutamyl-tRNA(Glu) + NADPH + H(+). It participates in porphyrin-containing compound metabolism; protoporphyrin-IX biosynthesis; 5-aminolevulinate from L-glutamyl-tRNA(Glu): step 1/2. Catalyzes the NADPH-dependent reduction of glutamyl-tRNA(Glu) to glutamate 1-semialdehyde (GSA). The polypeptide is Glutamyl-tRNA reductase (Geobacillus kaustophilus (strain HTA426)).